A 376-amino-acid chain; its full sequence is ATP phosphoribosyltransferase regulatory subunit (376 aa).

The protein belongs to the class-II aminoacyl-tRNA synthetase family. HisZ subfamily. As to quaternary structure, heteromultimer composed of HisG and HisZ subunits.

It is found in the cytoplasm. Its pathway is amino-acid biosynthesis; L-histidine biosynthesis; L-histidine from 5-phospho-alpha-D-ribose 1-diphosphate: step 1/9. Its function is as follows. Required for the first step of histidine biosynthesis. May allow the feedback regulation of ATP phosphoribosyltransferase activity by histidine. This Brucella anthropi (strain ATCC 49188 / DSM 6882 / CCUG 24695 / JCM 21032 / LMG 3331 / NBRC 15819 / NCTC 12168 / Alc 37) (Ochrobactrum anthropi) protein is ATP phosphoribosyltransferase regulatory subunit.